Here is a 318-residue protein sequence, read N- to C-terminus: Glutathione synthetase (318 aa).

Residues 133-317 form the ATP-grasp domain; it reads KMYALQFTSV…LGQQVMAWLF (185 aa). 159-215 is an ATP binding site; it reads VQQQGMAVLKPLGGKGGEGILFLQAGDRNLNSMIEISTQRGQLPVMLQEYLPAAKEG. Mg(2+)-binding residues include glutamate 288 and asparagine 290.

It belongs to the prokaryotic GSH synthase family. Mg(2+) is required as a cofactor. Mn(2+) serves as cofactor.

It catalyses the reaction gamma-L-glutamyl-L-cysteine + glycine + ATP = glutathione + ADP + phosphate + H(+). It functions in the pathway sulfur metabolism; glutathione biosynthesis; glutathione from L-cysteine and L-glutamate: step 2/2. This is Glutathione synthetase from Thermosynechococcus vestitus (strain NIES-2133 / IAM M-273 / BP-1).